A 439-amino-acid chain; its full sequence is MGHSAVLLSVALVILPACVTGGPVQRQQQHKLLLVSFDGFRWNYDQDVETPNLDSMAQEGVKARYMTPAFVTMTSPCHFTLVTGKYIENHGVVHNMFYNTTNKVRLPYHATLGIQRWWDNGSIPIWITAQRQGLKTGSFFYPGGNVTYQGEAVTMSRKEGVLHNYKNETEWRANVDTVMKWFTEEDVSLVTLYFGEPDSTGHKYGPESQERKDMVKQVDRTVGYLRDSIKRHHLTDSLNLIITSDHGMTTVNKKASDLVEFHKFPNFTFRDIEFELLDYGPNGMLIPKEGMLEKVYSVLKDAHPRLHVYKKEDFPKTFHYANNPRITSLLMYSDLGYVIHGRVNVQFNSGEHGFDNQDMDMKTIFRAVGPSFKAGLEVEPFESVHVYELMCQLLGIVPEPNDGHPGVLQPMLRSGSPLSRQHHLVVVLMGILTGLAKVV.

The signal sequence occupies residues 1–21 (MGHSAVLLSVALVILPACVTG). The Extracellular portion of the chain corresponds to 22 to 422 (GPVQRQQQHK…RSGSPLSRQH (401 aa)). Zn(2+) contacts are provided by Asp38 and Thr74. A required for enzyme activity region spans residues 71-77 (VTMTSPC). Thr74 (nucleophile) is an active-site residue. Residue Asn95 coordinates substrate. Residues Asn99, Asn120, Asn145, and Asn167 are each glycosylated (N-linked (GlcNAc...) asparagine). The Zn(2+) site is built by Asp198, His202, Asp245, and His246. The N-linked (GlcNAc...) asparagine glycan is linked to Asn266. His352 provides a ligand contact to Zn(2+). A helical membrane pass occupies residues 423–439 (HLVVVLMGILTGLAKVV).

This sequence belongs to the nucleotide pyrophosphatase/phosphodiesterase family. The cofactor is Zn(2+). In terms of processing, N-glycosylated; required for activity and transport to the plasma membrane. As to expression, detected in small intestine (at protein level). Highly expressed in the jejunum.

The protein localises to the cell membrane. The catalysed reaction is a sphingomyelin + H2O = phosphocholine + an N-acylsphing-4-enine + H(+). It carries out the reaction a 1-O-alkyl-2-acetyl-sn-glycero-3-phosphocholine + H2O = a 1-O-alkyl-2-acetyl-sn-glycerol + phosphocholine + H(+). It catalyses the reaction 1-O-octadecyl-2-acetyl-sn-glycero-3-phosphocholine + H2O = 1-O-octadecyl-2-acetyl-sn-glycerol + phosphocholine + H(+). The enzyme catalyses 1-hexadecanoyl-sn-glycero-3-phosphocholine + H2O = 1-hexadecanoyl-sn-glycerol + phosphocholine + H(+). With respect to regulation, platelet-activating factor hydrolysis is inhibited by higher amount of sphingomyelin. The hydrolysis of platelet-activating factor and sphingomyelin can be inhibited by the presence of sphingomyelin and platelet-activating factor respectively, the inhibition of platelet-activating factor hydrolysis by sphingomyelin being stronger. PAF hydrolysis is dose-dependently increased by both taurocholate (TC) and taurodeoxycholate (TDC). Hydrolase activity against PAF is inhibited by EDTA and stimulated by 0.1-0.25 mM Zn2+. In terms of biological role, choline-specific phosphodiesterase that hydrolyzes sphingomyelin (SM) releasing the ceramide and phosphocholine and therefore is involved in sphingomyelin digestion, ceramide formation, and fatty acid (FA) absorption in the gastrointestinal tract. Also has phospholipase C activity and can also cleave phosphocholine from palmitoyl lyso-phosphatidylcholine and platelet-activating factor (PAF) leading to its inactivation. Does not have nucleotide pyrophosphatase activity. May promote cholesterol absorption by affecting the levels of sphingomyelin derived from either diet or endogenous sources, in the intestinal lumen. This chain is Ectonucleotide pyrophosphatase/phosphodiesterase family member 7, found in Rattus norvegicus (Rat).